Reading from the N-terminus, the 123-residue chain is Large ribosomal subunit protein uL14c (123 aa).

Belongs to the universal ribosomal protein uL14 family. Part of the 50S ribosomal subunit.

It localises to the plastid. Its subcellular location is the chloroplast. Functionally, binds to 23S rRNA. The polypeptide is Large ribosomal subunit protein uL14c (Sorghum bicolor (Sorghum)).